A 136-amino-acid polypeptide reads, in one-letter code: Histone H3.3 type c (136 aa).

The segment at Met-1–Lys-30 is disordered. The residue at position 5 (Lys-5) is an N6,N6,N6-trimethyllysine; by set1; alternate. Lys-5 carries the post-translational modification N6,N6-dimethyllysine; by set1; alternate. An N6-acetyllysine; alternate mark is found at Lys-5 and Lys-10. Lys-5 carries the post-translational modification N6-methyllysine; by set1; alternate. The residue at position 10 (Lys-10) is an N6,N6,N6-trimethyllysine; alternate. Residue Lys-10 is modified to N6,N6-dimethyllysine; alternate. An N6-methyllysine; alternate modification is found at Lys-10. The residue at position 11 (Ser-11) is a Phosphoserine. N6-acetyllysine is present on Lys-15. An N6-acetyllysine; alternate mark is found at Lys-19, Lys-24, and Lys-37. 3 positions are modified to N6-methyllysine; alternate: Lys-19, Lys-24, and Lys-37. Residue Lys-37 is modified to N6,N6,N6-trimethyllysine; alternate. At Lys-37 the chain carries N6,N6-dimethyllysine; alternate. Position 57 is an N6-acetyllysine (Lys-57). Position 80 is an N6,N6,N6-trimethyllysine; alternate (Lys-80). Lys-80 is modified (N6,N6-dimethyllysine; alternate). Lys-80 carries the post-translational modification N6-methyllysine; alternate.

The protein belongs to the histone H3 family. In terms of assembly, the nucleosome is a histone octamer containing two molecules each of H2A, H2B, H3 and H4 assembled in one H3-H4 heterotetramer and two H2A-H2B heterodimers. The octamer wraps approximately 147 bp of DNA. Post-translationally, acetylation is generally linked to gene activation. In terms of processing, different methylation states of H3K4 mark distinct developmental phases. H3K4me2 is associated with euchromatic regions. H3K4me3 is a mark of active chromatin. set1 is responsible for all mono-, di- and tri-methylation of H3K4. H3K4me facilitates subsequent acetylation of H3 and H4. Methylation at H3K9 is linked to gene repression. H3S10ph, which is linked to gene activation, prevents methylation at H3K9 but facilitates acetylation of H3 and H4.

The protein resides in the nucleus. It is found in the chromosome. Functionally, core component of nucleosome. Nucleosomes wrap and compact DNA into chromatin, limiting DNA accessibility to the cellular machineries which require DNA as a template. Histones thereby play a central role in transcription regulation, DNA repair, DNA replication and chromosomal stability. DNA accessibility is regulated via a complex set of post-translational modifications of histones, also called histone code, and nucleosome remodeling. This Dictyostelium discoideum (Social amoeba) protein is Histone H3.3 type c (H3c).